The chain runs to 729 residues: Neurochondrin (729 aa).

Residue S2 is modified to N-acetylserine. S2 bears the Phosphoserine mark. 2 S-palmitoyl cysteine lipidation sites follow: C3 and C4. At R75 the chain carries Asymmetric dimethylarginine. Position 448 is a phosphoserine (S448).

The protein belongs to the neurochondrin family. Interacts with MCHR1. Interacts with SEMA4C. Interacts with DIAPH1 (via FH3 domain). Interacts with GRM5. Palmitoylated. Palmitoylation by ZDHHC1, ZDHHC3 and ZDHHC11 regulates the association of NCDN with endosome membranes. May also be palmitoylated by ZDHHC7.

It localises to the cytoplasm. The protein localises to the cytosol. The protein resides in the endosome membrane. Its subcellular location is the cell projection. It is found in the dendrite. It localises to the postsynapse. Functionally, probably involved in signal transduction, in the nervous system, via increasing cell surface localization of GRM5 and positively regulating its signaling. Required for the spatial learning process. Acts as a negative regulator of Ca(2+)-calmodulin-dependent protein kinase 2 (CaMK2) phosphorylation. May play a role in modulating melanin-concentrating hormone-mediated functions via its interaction with MCHR1 that interferes with G protein-coupled signal transduction. May be involved in bone metabolism. May also be involved in neurite outgrowth. The chain is Neurochondrin (NCDN) from Bos taurus (Bovine).